The sequence spans 790 residues: Pleckstrin homology domain-containing family G member 6 (790 aa).

The segment at 63-91 (SGQARGLSPMRLRDPEPEKRHGGHVGAGL) is disordered. Residues 73 to 82 (RLRDPEPEKR) show a composition bias toward basic and acidic residues. A DH domain is found at 161 to 353 (HQQEALWELL…ESFLRHINGQ (193 aa)). The region spanning 409–509 (QLLLEGPVRV…WLEKTQQAQA (101 aa)) is the PH domain. Composition is skewed to basic and acidic residues over residues 529–538 (LYRDQDRESP) and 625–635 (ELRDIPLRPHP). Disordered regions lie at residues 529–677 (LYRD…ASER), 690–730 (LRGQ…HTSL), and 748–790 (SQRI…ASEV). Over residues 748–762 (SQRIEGAEEPRDSRP) the composition is skewed to basic and acidic residues.

As to quaternary structure, interacts with MYH10. Interacts with ELMO1 and EZR (in an open conformation). Interacts with CSPP1. Highest expression in the placenta. Low levels in small intestine, lung, liver, kidney, thymus and heart.

It localises to the cell projection. The protein localises to the microvillus. It is found in the cytoplasm. The protein resides in the cytoskeleton. Its subcellular location is the spindle. It localises to the spindle pole. The protein localises to the cleavage furrow. Its function is as follows. Guanine nucleotide exchange factor activating the small GTPase RHOA, which, in turn, induces myosin filament formation. Also activates RHOG. Does not activate RAC1, or to a much lower extent than RHOA and RHOG. Part of a functional unit, involving PLEKHG6, MYH10 and RHOA, at the cleavage furrow to advance furrow ingression during cytokinesis. In epithelial cells, required for the formation of microvilli and membrane ruffles on the apical pole. Along with EZR, required for normal macropinocytosis. This is Pleckstrin homology domain-containing family G member 6 (PLEKHG6) from Homo sapiens (Human).